The primary structure comprises 357 residues: DNA replication and repair protein RecF (357 aa).

Residue 30 to 37 (GANGSGKT) coordinates ATP.

This sequence belongs to the RecF family.

The protein resides in the cytoplasm. The RecF protein is involved in DNA metabolism; it is required for DNA replication and normal SOS inducibility. RecF binds preferentially to single-stranded, linear DNA. It also seems to bind ATP. This is DNA replication and repair protein RecF from Shigella boydii serotype 4 (strain Sb227).